Reading from the N-terminus, the 302-residue chain is Sulfate adenylyltransferase subunit 2 (302 aa).

Positions 280–302 (RQGRLIDSDQSASMEQKKRQGYF) are disordered.

This sequence belongs to the PAPS reductase family. CysD subfamily. As to quaternary structure, heterodimer composed of CysD, the smaller subunit, and CysN.

It carries out the reaction sulfate + ATP + H(+) = adenosine 5'-phosphosulfate + diphosphate. It functions in the pathway sulfur metabolism; hydrogen sulfide biosynthesis; sulfite from sulfate: step 1/3. With CysN forms the ATP sulfurylase (ATPS) that catalyzes the adenylation of sulfate producing adenosine 5'-phosphosulfate (APS) and diphosphate, the first enzymatic step in sulfur assimilation pathway. APS synthesis involves the formation of a high-energy phosphoric-sulfuric acid anhydride bond driven by GTP hydrolysis by CysN coupled to ATP hydrolysis by CysD. This Shewanella baltica (strain OS223) protein is Sulfate adenylyltransferase subunit 2.